The following is a 291-amino-acid chain: Sulfotransferase 1A1 (291 aa).

44 to 49 lines the 3'-phosphoadenylyl sulfate pocket; that stretch reads KSGTNW. 102–104 provides a ligand contact to substrate; sequence KTH. H104 functions as the Proton acceptor in the catalytic mechanism. 3'-phosphoadenylyl sulfate-binding positions include R126, S134, Y189, 223-228, and 251-255; these read TSFKKM and FMRKG. S134 bears the Phosphoserine mark.

The protein belongs to the sulfotransferase 1 family. As to quaternary structure, homodimer. Expressed in brain, colon, liver, and small intestine of mice colonized with B.ovatus and L.plantarum.

The protein localises to the cytoplasm. The enzyme catalyses a phenol + 3'-phosphoadenylyl sulfate = an aryl sulfate + adenosine 3',5'-bisphosphate + H(+). It catalyses the reaction 17beta-estradiol + 3'-phosphoadenylyl sulfate = 17beta-estradiol 3-sulfate + adenosine 3',5'-bisphosphate + H(+). The catalysed reaction is 4-ethylphenol + 3'-phosphoadenylyl sulfate = 4-ethylphenyl sulfate + adenosine 3',5'-bisphosphate + H(+). It carries out the reaction 4-nitrophenol + 3'-phosphoadenylyl sulfate = 4-nitrophenyl sulfate + adenosine 3',5'-bisphosphate. The enzyme catalyses dopamine + 3'-phosphoadenylyl sulfate = dopamine 3-O-sulfate + adenosine 3',5'-bisphosphate + H(+). It catalyses the reaction dopamine + 3'-phosphoadenylyl sulfate = dopamine 4-O-sulfate + adenosine 3',5'-bisphosphate + H(+). The catalysed reaction is 3,3',5-triiodo-L-thyronine + 3'-phosphoadenylyl sulfate = 3,3',5-triiodo-L-thyronine sulfate + adenosine 3',5'-bisphosphate + H(+). It carries out the reaction 3,3',5'-triiodo-L-thyronine + 3'-phosphoadenylyl sulfate = 3,3',5'-triiodo-L-thyronine sulfate + adenosine 3',5'-bisphosphate + H(+). The enzyme catalyses 3,3'-diiodo-L-thyronine + 3'-phosphoadenylyl sulfate = 3,3'-diiodo-L-thyronine sulfate + adenosine 3',5'-bisphosphate + H(+). It catalyses the reaction L-thyroxine + 3'-phosphoadenylyl sulfate = L-thyroxine sulfate + adenosine 3',5'-bisphosphate + H(+). Its function is as follows. Sulfotransferase that utilizes 3'-phospho-5'-adenylyl sulfate (PAPS) as sulfonate donor to catalyze the sulfate conjugation of a wide variety of acceptor molecules bearing a hydroxyl or an amine group. Sulfonation increases the water solubility of most compounds, and therefore their renal excretion, but it can also result in bioactivation to form active metabolites. Displays broad substrate specificity for small phenolic compounds. Plays an important role in the sulfonation of endogenous molecules such as steroid hormones. Mediates also the metabolic activation of carcinogenic N-hydroxyarylamines leading to highly reactive intermediates capable of forming DNA adducts, potentially resulting in mutagenesis. May play a role in gut microbiota-host metabolic interaction. O-sulfonates 4-ethylphenol (4-EP), a dietary tyrosine-derived metabolite produced by gut bacteria. The product 4-EPS crosses the blood-brain barrier and may negatively regulate oligodendrocyte maturation and myelination, affecting the functional connectivity of different brain regions associated with the limbic system. Catalyzes the sulfate conjugation of dopamine. Catalyzes the sulfation of T4 (L-thyroxine/3,5,3',5'-tetraiodothyronine), T3 (3,5,3'-triiodothyronine), rT3 (3,3',5'-triiodothyronine) and 3,3'-T2 (3,3'-diiodothyronine), with a substrate preference of 3,3'-T2 &gt; rT3 &gt; T3 &gt; T4. The sequence is that of Sulfotransferase 1A1 (Sult1a1) from Mus musculus (Mouse).